We begin with the raw amino-acid sequence, 201 residues long: Recombination protein RecR (201 aa).

A C4-type zinc finger spans residues 57–72; the sequence is CQVCYSLSDNDICDIC. A Toprim domain is found at 80–177; sequence NKICIVESYP…RITRITYGIS (98 aa).

It belongs to the RecR family.

Functionally, may play a role in DNA repair. It seems to be involved in an RecBC-independent recombinational process of DNA repair. It may act with RecF and RecO. The protein is Recombination protein RecR of Brachyspira hyodysenteriae (strain ATCC 49526 / WA1).